The following is a 378-amino-acid chain: Chorismate synthase (378 aa).

The segment at 42–61 (IQAELDRRRPGQSPITTPRQ) is disordered. Residue arginine 49 coordinates NADP(+). FMN-binding positions include 126 to 128 (RAS), glycine 287, 302 to 306 (KPTAT), and arginine 328.

The protein belongs to the chorismate synthase family. In terms of assembly, homotetramer. The cofactor is FMNH2.

The catalysed reaction is 5-O-(1-carboxyvinyl)-3-phosphoshikimate = chorismate + phosphate. Its pathway is metabolic intermediate biosynthesis; chorismate biosynthesis; chorismate from D-erythrose 4-phosphate and phosphoenolpyruvate: step 7/7. Its function is as follows. Catalyzes the anti-1,4-elimination of the C-3 phosphate and the C-6 proR hydrogen from 5-enolpyruvylshikimate-3-phosphate (EPSP) to yield chorismate, which is the branch point compound that serves as the starting substrate for the three terminal pathways of aromatic amino acid biosynthesis. This reaction introduces a second double bond into the aromatic ring system. This chain is Chorismate synthase, found in Synechococcus sp. (strain JA-2-3B'a(2-13)) (Cyanobacteria bacterium Yellowstone B-Prime).